We begin with the raw amino-acid sequence, 98 residues long: uncharacterized protein (98 aa).

Transmembrane regions (helical) follow at residues 2-22 (IVTL…GLWW) and 70-90 (AAKA…LPIL).

It is found in the cell membrane. This is an uncharacterized protein from Sinorhizobium fredii (strain NBRC 101917 / NGR234).